The primary structure comprises 392 residues: 8-amino-7-oxononanoate synthase (392 aa).

R26 provides a ligand contact to substrate. Position 113-114 (113-114) interacts with pyridoxal 5'-phosphate; it reads GY. H138 provides a ligand contact to substrate. Pyridoxal 5'-phosphate contacts are provided by S186, H214, and T241. N6-(pyridoxal phosphate)lysine is present on K244. Substrate is bound at residue T353.

Belongs to the class-II pyridoxal-phosphate-dependent aminotransferase family. BioF subfamily. Homodimer. Pyridoxal 5'-phosphate is required as a cofactor.

The enzyme catalyses 6-carboxyhexanoyl-[ACP] + L-alanine + H(+) = (8S)-8-amino-7-oxononanoate + holo-[ACP] + CO2. It participates in cofactor biosynthesis; biotin biosynthesis. Its function is as follows. Catalyzes the decarboxylative condensation of pimeloyl-[acyl-carrier protein] and L-alanine to produce 8-amino-7-oxononanoate (AON), [acyl-carrier protein], and carbon dioxide. This Maricaulis maris (strain MCS10) (Caulobacter maris) protein is 8-amino-7-oxononanoate synthase.